Reading from the N-terminus, the 466-residue chain is Glutamate--tRNA ligase 1 (466 aa).

The 'HIGH' region signature appears at 10–20; it reads PSPTGLIHLGN. Cys-103, Cys-105, Cys-130, and His-132 together coordinate Zn(2+). Residues 247–251 carry the 'KMSKS' region motif; it reads PLSKR. Residue Lys-250 coordinates ATP.

Belongs to the class-I aminoacyl-tRNA synthetase family. Glutamate--tRNA ligase type 1 subfamily. In terms of assembly, monomer. The cofactor is Zn(2+).

It localises to the cytoplasm. The catalysed reaction is tRNA(Glu) + L-glutamate + ATP = L-glutamyl-tRNA(Glu) + AMP + diphosphate. Catalyzes the attachment of glutamate to tRNA(Glu) in a two-step reaction: glutamate is first activated by ATP to form Glu-AMP and then transferred to the acceptor end of tRNA(Glu). This is Glutamate--tRNA ligase 1 from Methylococcus capsulatus (strain ATCC 33009 / NCIMB 11132 / Bath).